The primary structure comprises 513 residues: Histidine ammonia-lyase (513 aa).

The segment at residues 144–146 (ASG) is a cross-link (5-imidazolinone (Ala-Gly)). A 2,3-didehydroalanine (Ser) modification is found at S145.

Belongs to the PAL/histidase family. Post-translationally, contains an active site 4-methylidene-imidazol-5-one (MIO), which is formed autocatalytically by cyclization and dehydration of residues Ala-Ser-Gly.

The protein localises to the cytoplasm. It carries out the reaction L-histidine = trans-urocanate + NH4(+). It participates in amino-acid degradation; L-histidine degradation into L-glutamate; N-formimidoyl-L-glutamate from L-histidine: step 1/3. The protein is Histidine ammonia-lyase of Streptococcus pyogenes serotype M5 (strain Manfredo).